The chain runs to 356 residues: S-adenosylmethionine:tRNA ribosyltransferase-isomerase (356 aa).

It belongs to the QueA family. As to quaternary structure, monomer.

It is found in the cytoplasm. It catalyses the reaction 7-aminomethyl-7-carbaguanosine(34) in tRNA + S-adenosyl-L-methionine = epoxyqueuosine(34) in tRNA + adenine + L-methionine + 2 H(+). The protein operates within tRNA modification; tRNA-queuosine biosynthesis. Functionally, transfers and isomerizes the ribose moiety from AdoMet to the 7-aminomethyl group of 7-deazaguanine (preQ1-tRNA) to give epoxyqueuosine (oQ-tRNA). The chain is S-adenosylmethionine:tRNA ribosyltransferase-isomerase from Xanthomonas campestris pv. campestris (strain 8004).